The primary structure comprises 351 residues: AT-hook motif nuclear-localized protein 10 (351 aa).

The interval 1–151 is disordered; it reads MSGSETGLMA…RPPGSSSKRL (151 aa). Over residues 23-37 the composition is skewed to low complexity; it reads HQQQQHSQAQPQQSQ. A compositionally biased stretch (polar residues) spans 60-77; that stretch reads SPPQQYQPNSAGENSVLN. A Bipartite nuclear localization signal motif is present at residues 97–105; the sequence is KKRRGRPRK. 2 consecutive DNA-binding regions (a.T hook) follow at residues 97–109 and 138–149; these read KKRR…YGPD and KKRGRPPGSSSK. The region spanning 159 to 301 is the PPC domain; that stretch reads TGIGFTPHVL…QMGLSSPVLP (143 aa). 2 stretches are compositionally biased toward polar residues: residues 310–325 and 334–351; these read MTPS…SESS and IHQS…MPWK. The disordered stretch occupies residues 310 to 351; the sequence is MTPSSPQSRGTMSESSCGGGHGSPIHQSTGGPYNNTINMPWK.

Its subcellular location is the nucleus. Its function is as follows. Transcription factor that specifically binds AT-rich DNA sequences related to the nuclear matrix attachment regions (MARs). The polypeptide is AT-hook motif nuclear-localized protein 10 (Arabidopsis thaliana (Mouse-ear cress)).